Here is a 300-residue protein sequence, read N- to C-terminus: Small ribosomal subunit protein uS4m (300 aa).

Residues 146-209 (KRVDMVLLRS…MKRKLLKRLK (64 aa)) enclose the S4 RNA-binding domain.

This sequence belongs to the universal ribosomal protein uS4 family.

It localises to the mitochondrion. This chain is Small ribosomal subunit protein uS4m (mrps4), found in Dictyostelium discoideum (Social amoeba).